Consider the following 84-residue polypeptide: Large ribosomal subunit protein bL28 (84 aa).

Belongs to the bacterial ribosomal protein bL28 family.

This is Large ribosomal subunit protein bL28 from Clostridium perfringens (strain 13 / Type A).